A 120-amino-acid chain; its full sequence is Urease subunit beta (120 aa).

Belongs to the urease beta subunit family. As to quaternary structure, heterotrimer of UreA (gamma), UreB (beta) and UreC (alpha) subunits. Three heterotrimers associate to form the active enzyme.

The protein localises to the cytoplasm. It carries out the reaction urea + 2 H2O + H(+) = hydrogencarbonate + 2 NH4(+). Its pathway is nitrogen metabolism; urea degradation; CO(2) and NH(3) from urea (urease route): step 1/1. In Corynebacterium efficiens (strain DSM 44549 / YS-314 / AJ 12310 / JCM 11189 / NBRC 100395), this protein is Urease subunit beta.